An 887-amino-acid chain; its full sequence is Alanine--tRNA ligase (887 aa).

4 residues coordinate Zn(2+): His-563, His-567, Cys-677, and His-681.

The protein belongs to the class-II aminoacyl-tRNA synthetase family. It depends on Zn(2+) as a cofactor.

The protein resides in the cytoplasm. The catalysed reaction is tRNA(Ala) + L-alanine + ATP = L-alanyl-tRNA(Ala) + AMP + diphosphate. In terms of biological role, catalyzes the attachment of alanine to tRNA(Ala) in a two-step reaction: alanine is first activated by ATP to form Ala-AMP and then transferred to the acceptor end of tRNA(Ala). Also edits incorrectly charged Ser-tRNA(Ala) and Gly-tRNA(Ala) via its editing domain. This Dinoroseobacter shibae (strain DSM 16493 / NCIMB 14021 / DFL 12) protein is Alanine--tRNA ligase.